A 274-amino-acid chain; its full sequence is Urease accessory protein UreD 2 (274 aa).

The protein belongs to the UreD family. In terms of assembly, ureD, UreF and UreG form a complex that acts as a GTP-hydrolysis-dependent molecular chaperone, activating the urease apoprotein by helping to assemble the nickel containing metallocenter of UreC. The UreE protein probably delivers the nickel.

Its subcellular location is the cytoplasm. In terms of biological role, required for maturation of urease via the functional incorporation of the urease nickel metallocenter. The sequence is that of Urease accessory protein UreD 2 from Brucella anthropi (strain ATCC 49188 / DSM 6882 / CCUG 24695 / JCM 21032 / LMG 3331 / NBRC 15819 / NCTC 12168 / Alc 37) (Ochrobactrum anthropi).